The primary structure comprises 512 residues: Ribose import ATP-binding protein RbsA 1 (512 aa).

ABC transporter domains are found at residues 8–244 (FRME…IGRE) and 257–502 (PEEK…LNIG). 40 to 47 (GENGAGKS) lines the ATP pocket.

Belongs to the ABC transporter superfamily. Ribose importer (TC 3.A.1.2.1) family. The complex is composed of an ATP-binding protein (RbsA), two transmembrane proteins (RbsC) and a solute-binding protein (RbsB).

The protein localises to the cell inner membrane. The catalysed reaction is D-ribose(out) + ATP + H2O = D-ribose(in) + ADP + phosphate + H(+). In terms of biological role, part of the ABC transporter complex RbsABC involved in ribose import. Responsible for energy coupling to the transport system. This is Ribose import ATP-binding protein RbsA 1 from Rhizobium etli (strain ATCC 51251 / DSM 11541 / JCM 21823 / NBRC 15573 / CFN 42).